A 690-amino-acid chain; its full sequence is MEDTFQDSASEDGGFDLRQEIARSAFADMCHDWERNQKYDRALQLTIARLHAAGQQAHVLDIGTGSGLLSMMAIRAGADSVVACEAFRPMADCAELIIAANGMQDRIRLVKKRSTKVTVGPGQDMERRANVLVTELFDTELIGEGALGTYRHALQHLLTEDVLTIPHQATVYAQVVECPLALSWQQLKTLSNADGDILLRVPPEVATCRGSSAVFDIQLSQLPAGSFNVLTDPVPVFKFAWSKHQELINDRCEQSVCHARTAGFPQAVFMWWDLTMDREGDVLLSCAPYWAHPEHEALKKKHSDNGSKRRLPEGNYIPWRDHWMQAVYFLPPLKIPLQRGQQFVLQSYHDEFSLWFGVGEQSVKEPLTAPHCTCGWHIAQSRSRIGQLNDSLRNKRYLNYFERVFSSDSVVLVLSEGSLLGLAAARMGVKQVLLYEPNAISRRCMEAFVEHNSVANVRFLPSADALEPEQAATITHVFAEPHFPSAILPWDNLHYGDLLKNLRPLLPASVTVIPASGTLYALPVEFVDLYKINAPLGSCEGFDLTLMDQLIDQHSTFADSPVEAQPLWEYPSFPLAGTTRLIEINFVKDFEQSKLERGELFVSEPERLNGIAIWIDWHLDGSHSPKTTISSGPLVPVEESSDEPTRWNTNWRQGVHLLRKTPNRKGTIPWSVKFNPVLSNVYFRFDEEEQ.

2 SAM-dependent MTase PRMT-type domains span residues phenylalanine 5–tryptophan 355 and lysine 364–glutamine 690.

It belongs to the class I-like SAM-binding methyltransferase superfamily. Protein arginine N-methyltransferase family. PRMT7 subfamily.

Functionally, essential arginine methyltransferase that can both catalyze the formation of omega-N monomethylarginine (MMA) and symmetrical dimethylarginine (sDMA). Specifically mediates the symmetrical dimethylation of arginine residues in the small nuclear ribonucleoproteins SmD1 and SmD3. The sequence is that of Protein arginine N-methyltransferase 7 (Art7) from Anopheles gambiae (African malaria mosquito).